The sequence spans 501 residues: Aldehyde dehydrogenase 1A1 (501 aa).

Serine 2 is modified (N-acetylserine). N6-acetyllysine occurs at positions 91 and 128. Residues 167–170, 193–196, 226–227, and 246–247 contribute to the NAD(+) site; these read IPWN, KPAE, GP, and GS. Lysine 252 is modified (N6-acetyllysine). Glutamate 269 functions as the Proton acceptor in the catalytic mechanism. NAD(+) is bound at residue 269-271; that stretch reads ELG. The Nucleophile role is filled by cysteine 303. The segment at 336–501 is mediates interaction with PRMT3; that stretch reads LTPGVTQGPQ…VTVKISQKNS (166 aa). At threonine 337 the chain carries Phosphothreonine. An NAD(+)-binding site is contributed by 349–353; that stretch reads EQYDK. N6-acetyllysine occurs at positions 353 and 367. NAD(+) is bound at residue 400–402; sequence EIF. Lysine 410 bears the N6-acetyllysine mark. A Phosphoserine modification is found at serine 413. 3 positions are modified to N6-acetyllysine: lysine 419, lysine 435, and lysine 495.

Belongs to the aldehyde dehydrogenase family. As to quaternary structure, homotetramer. Interacts with PRMT3; the interaction is direct, inhibits ALDH1A1 aldehyde dehydrogenase activity and is independent of the methyltransferase activity of PRMT3. In terms of processing, the N-terminus is blocked most probably by acetylation. In terms of tissue distribution, expressed by erythrocytes (at protein level).

Its subcellular location is the cytoplasm. It localises to the cytosol. The protein resides in the cell projection. It is found in the axon. The enzyme catalyses an aldehyde + NAD(+) + H2O = a carboxylate + NADH + 2 H(+). It catalyses the reaction all-trans-retinal + NAD(+) + H2O = all-trans-retinoate + NADH + 2 H(+). It carries out the reaction 9-cis-retinal + NAD(+) + H2O = 9-cis-retinoate + NADH + 2 H(+). The catalysed reaction is 11-cis-retinal + NAD(+) + H2O = 11-cis-retinoate + NADH + 2 H(+). The enzyme catalyses 13-cis-retinal + NAD(+) + H2O = 13-cis-retinoate + NADH + 2 H(+). It catalyses the reaction 3-deoxyglucosone + NAD(+) + H2O = 2-dehydro-3-deoxy-D-gluconate + NADH + 2 H(+). It carries out the reaction (E)-4-hydroxynon-2-enal + NAD(+) + H2O = (E)-4-hydroxynon-2-enoate + NADH + 2 H(+). The catalysed reaction is malonaldehyde + NAD(+) + H2O = 3-oxopropanoate + NADH + 2 H(+). The enzyme catalyses hexanal + NAD(+) + H2O = hexanoate + NADH + 2 H(+). It catalyses the reaction propanal + NAD(+) + H2O = propanoate + NADH + 2 H(+). It carries out the reaction acetaldehyde + NAD(+) + H2O = acetate + NADH + 2 H(+). The catalysed reaction is benzaldehyde + NAD(+) + H2O = benzoate + NADH + 2 H(+). The enzyme catalyses 4-aminobutanal + NAD(+) + H2O = 4-aminobutanoate + NADH + 2 H(+). It participates in cofactor metabolism; retinol metabolism. Inhibited by citral, disulfiram, and cyanamide. Activated by diethylstilbestrol. Inhibited by duocarmycin analogs. Cytosolic dehydrogenase that catalyzes the irreversible oxidation of a wide range of aldehydes to their corresponding carboxylic acid. Functions downstream of retinol dehydrogenases and catalyzes the oxidation of retinaldehyde into retinoic acid, the second step in the oxidation of retinol/vitamin A into retinoic acid. This pathway is crucial to control the levels of retinol and retinoic acid, two important molecules which excess can be teratogenic and cytotoxic. Also oxidizes aldehydes resulting from lipid peroxidation like (E)-4-hydroxynon-2-enal/HNE, malonaldehyde and hexanal that form protein adducts and are highly cytotoxic. By participating for instance to the clearance of (E)-4-hydroxynon-2-enal/HNE in the lens epithelium prevents the formation of HNE-protein adducts and lens opacification. Also functions downstream of fructosamine-3-kinase in the fructosamine degradation pathway by catalyzing the oxidation of 3-deoxyglucosone, the carbohydrate product of fructosamine 3-phosphate decomposition, which is itself a potent glycating agent that may react with lysine and arginine side-chains of proteins. Also has an aminobutyraldehyde dehydrogenase activity and is probably part of an alternative pathway for the biosynthesis of GABA/4-aminobutanoate in midbrain, thereby playing a role in GABAergic synaptic transmission. In Homo sapiens (Human), this protein is Aldehyde dehydrogenase 1A1.